Reading from the N-terminus, the 308-residue chain is GATA transcription factor 9 (308 aa).

Positions 34 to 57 (DDGLNTLPDSSTLSTGTLTDSSNS) are disordered. Low complexity predominate over residues 39-57 (TLPDSSTLSTGTLTDSSNS). Positions 142–149 (KARSKRSR) match the Nuclear localization signal motif. A GATA-type zinc finger spans residues 193-247 (SGGGRRCLHCATEKTPQWRTGPMGPKTLCNACGVRYKSGRLVPEYRPASSPTFVM).

It belongs to the type IV zinc-finger family. Class A subfamily.

It localises to the nucleus. In terms of biological role, transcriptional activator that specifically binds 5'-GATA-3' or 5'-GAT-3' motifs within gene promoters. May be involved in the regulation of some light-responsive genes. The polypeptide is GATA transcription factor 9 (GATA9) (Arabidopsis thaliana (Mouse-ear cress)).